We begin with the raw amino-acid sequence, 201 residues long: Iron-sulfur flavoprotein AF_1896 (201 aa).

[4Fe-4S] cluster contacts are provided by Cys-46, Cys-49, Cys-52, and Cys-57.

It belongs to the SsuE family. Isf subfamily. Homodimer. It depends on FMN as a cofactor. [4Fe-4S] cluster is required as a cofactor.

Functionally, redox-active protein probably involved in electron transport. This is Iron-sulfur flavoprotein AF_1896 from Archaeoglobus fulgidus (strain ATCC 49558 / DSM 4304 / JCM 9628 / NBRC 100126 / VC-16).